Consider the following 128-residue polypeptide: UPF0325 protein YaeH (128 aa).

Belongs to the UPF0325 family.

The sequence is that of UPF0325 protein YaeH from Salmonella agona (strain SL483).